The sequence spans 528 residues: Neuronal acetylcholine receptor subunit alpha-2 (528 aa).

The signal sequence occupies residues 1 to 23; sequence MGWPCRSIIPLLVWCFVTLQAAT. The Extracellular portion of the chain corresponds to 24–239; it reads REQKQPHGFA…ITFYFVIRRL (216 aa). Asn54 and Asn104 each carry an N-linked (GlcNAc...) asparagine glycan. 2 cysteine pairs are disulfide-bonded: Cys158/Cys172 and Cys222/Cys223. 3 helical membrane-spanning segments follow: residues 240-264, 272-290, and 306-327; these read PLFY…VFYL, ITLC…LLIT, and YLLF…VLNV. Residues 328 to 501 lie on the Cytoplasmic side of the membrane; that stretch reads HHRSPSTHTM…WKYVAMVIDR (174 aa). A compositionally biased stretch (acidic residues) spans 390 to 410; the sequence is DDKWEEEEEEEEEEEEEEEEE. The disordered stretch occupies residues 390 to 427; sequence DDKWEEEEEEEEEEEEEEEEEKAYPSRVPSGGSQGTQC. A helical membrane pass occupies residues 502–520; the sequence is IFLWMFIIVCLLGTVGLFL.

This sequence belongs to the ligand-gated ion channel (TC 1.A.9) family. Acetylcholine receptor (TC 1.A.9.1) subfamily. Alpha-2/CHRNA2 sub-subfamily. As to quaternary structure, neuronal AChR is composed of two different types of subunits: alpha and non-alpha (beta). CHRNA2/alpha-2 subunit can be combined to CHRNB2/beta-2 or CHRNB4/beta-4 to give rise to functional receptors. Both CHRNA2:CHRNB2 and CHRNA2:CHRNB4 nAChR complexes are heteropentamers with two subtypes: LS (low agonist sensitivity) with a (CHRNA2)3:(CHRNB2/4)2 and HS (high agonist sensitivity) with a (CHRNA2)2:(CHRNB2/4)3 stoichiometries; the subtypes differ in their subunit binding interfaces which are involved in ligand binding.

The protein resides in the synaptic cell membrane. It localises to the cell membrane. The catalysed reaction is Ca(2+)(in) = Ca(2+)(out). It carries out the reaction K(+)(in) = K(+)(out). It catalyses the reaction Na(+)(in) = Na(+)(out). In terms of biological role, component of neuronal acetylcholine receptors (nAChRs) that function as pentameric, ligand-gated cation channels with high calcium permeability among other activities. nAChRs are excitatory neurotrasnmitter receptors formed by a collection of nAChR subunits known to mediate synaptic transmission in the nervous system and the neuromuscular junction. Each nAchR subunit confers differential attributes to channel properties, including activation, deactivation and desensitization kinetics, pH sensitivity, cation permeability, and binding to allosteric modulators. CHRNA2 forms heteropentameric neuronal acetylcholine receptors with CHRNB2 and CHRNB4 and plays a role in nicotine dependence. The sequence is that of Neuronal acetylcholine receptor subunit alpha-2 (CHRNA2) from Gallus gallus (Chicken).